The sequence spans 1325 residues: RIMS-binding protein 2 (1325 aa).

Residues 153–181 (TFLSKSRSDTPRCRFDSDMDNDQNSNTSK) form a disordered region. The segment covering 158 to 169 (SRSDTPRCRFDS) has biased composition (basic and acidic residues). Residues 186–253 (GKVHLCIARY…PSNFVDFVQD (68 aa)) form the SH3 1 domain. 3 Fibronectin type-III domains span residues 315-408 (VPYP…GKDV), 411-493 (APSN…KKEA), and 507-608 (PPQD…VPPS). 3 disordered regions span residues 601-778 (SDLL…GSDL), 988-1010 (DLGS…KKYE), and 1040-1090 (AAGP…SRPM). The span at 627-641 (ETKEEHLGPHLKIDE) shows a compositional bias: basic and acidic residues. The span at 664–676 (FPSSLQGRRSPSP) shows a compositional bias: polar residues. The span at 696 to 716 (MAREAAQRVAESNRMERRSVF) shows a compositional bias: basic and acidic residues. A compositionally biased stretch (polar residues) spans 717-727 (SERSNAAQYAN). Composition is skewed to basic and acidic residues over residues 763 to 774 (CHGEDYHTESSR) and 996 to 1010 (PRSE…KKYE). SH3 domains follow at residues 1121–1189 (ISTR…EIQA) and 1225–1292 (VSTR…EVPD).

Belongs to the RIMBP family. In terms of assembly, interacts with RIMS1, RIMS2, CACNA1D and CACNA1B, and potentially with other Ca(2+) channel alpha-1 isoforms. As to expression, brain, cochlea and retina.

The protein resides in the cell membrane. It localises to the synapse. Functionally, plays a role in the synaptic transmission as bifunctional linker that interacts simultaneously with RIMS1, RIMS2, CACNA1D and CACNA1B. The protein is RIMS-binding protein 2 (RIMBP2) of Gallus gallus (Chicken).